The sequence spans 266 residues: Vitamin B12-binding protein (266 aa).

Residues 1 to 22 (MAKQMFRALVALLLTLPVWLYA) form the signal peptide. Residues 25–266 (RVITLSPANT…QLCNALSQVN (242 aa)) form the Fe/B12 periplasmic-binding domain. Cyanocob(III)alamin contacts are provided by residues tyrosine 50 and 242 to 246 (DWFER). Cysteine 183 and cysteine 259 form a disulfide bridge.

It belongs to the BtuF family. In terms of assembly, the complex is composed of two ATP-binding proteins (BtuD), two transmembrane proteins (BtuC) and a solute-binding protein (BtuF).

It is found in the periplasm. Part of the ABC transporter complex BtuCDF involved in vitamin B12 import. Binds vitamin B12 and delivers it to the periplasmic surface of BtuC. The polypeptide is Vitamin B12-binding protein (Salmonella paratyphi A (strain ATCC 9150 / SARB42)).